The chain runs to 316 residues: Prenytransferase adrG (316 aa).

7 helical membrane-spanning segments follow: residues 36–56, 60–80, 131–151, 163–183, 191–211, 247–267, and 294–314; these read LLGFYLNTSPYLVGVAFCASI, KIPITVLLHRTILLSIWSIFL, VLIYLPWPCAVDCLIITFFAL, PQITLVNIGWAIPMAMHSLGL, PTVCMFLFIGLVIIMIDVIYS, GFLAMAGFFTGLGLSFFVVSV, and KSAFFLATLFWLFGFVIEYCL.

It belongs to the UbiA prenyltransferase family. The cofactor is Mg(2+).

It localises to the membrane. The enzyme catalyses 3,5-dimethylorsellinate + (2E,6E)-farnesyl diphosphate = (3R)-3-farnesyl-6-hydroxy-2,3,5-trimethyl-4-oxocyclohexa-1,5-diene-1-carboxylate + diphosphate + H(+). It functions in the pathway secondary metabolite biosynthesis; terpenoid biosynthesis. Its function is as follows. Prenytransferase; part of the gene cluster that mediates the biosynthesis of andrastins, meroterpenoid compounds that exhibit inhibitory activity against ras farnesyltransferase, suggesting that they could be promising leads for antitumor agents. The first step of the pathway is the synthesis of 3,5-dimethylorsellinic acid (DMOA) by the polyketide synthase adrD via condensation of one acetyl-CoA starter unit with 3 malonyl-CoA units and 2 methylations. DMAO is then converted to farnesyl-DMAO by the prenyltransferase adrG. The methyltransferase adrK catalyzes the methylation of the carboxyl group of farnesyl-DMAO to farnesyl-DMAO methyl ester which is further converted to epoxyfarnesyl-DMAO methyl ester by the FAD-dependent monooxygenase adrH. The terpene cyclase adrI then catalyzes the carbon skeletal rearrangement to generate the andrastin E, the first compound in the pathway having the andrastin scaffold, with the tetracyclic ring system. The post-cyclization tailoring enzymes adrF, adrE, adrJ, and adrA, are involved in the conversion of andrastin E into andrastin A. The short chain dehydrogenase adrF is responsible for the oxidation of the C-3 a hydroxyl group of andrastin E to yield the corresponding ketone, andrastin D. The ketoreductase adrE stereoselectively reduces the carbonyl moiety to reverse the stereochemistry of the C-3 position to yield andrastin F. The acetyltransferase adrJ is the acetyltransferase that attaches the acetyl group to the C-3 hydroxyl group of andrastin F to yield andrastin C. Finally, the cytochrome P450 monooxygenase adrA catalyzes two sequential oxidation reactions of the C-23 methyl group, to generate the corresponding alcohol andrastin B, and aldehyde andrastin A. The polypeptide is Prenytransferase adrG (Penicillium roqueforti).